The following is a 745-amino-acid chain: Elongation factor G, mitochondrial (745 aa).

Residues 1–15 (MSLITRLLTASSPLR) constitute a mitochondrion transit peptide. The region spanning 40–317 (DKIRNIGISA…AVLEYLPNPG (278 aa)) is the tr-type G domain. GTP contacts are provided by residues 49–56 (AHIDSGKT), 116–120 (DTPGH), and 170–173 (NKLD).

The protein belongs to the TRAFAC class translation factor GTPase superfamily. Classic translation factor GTPase family. EF-G/EF-2 subfamily.

The protein resides in the mitochondrion. The protein operates within protein biosynthesis; polypeptide chain elongation. Mitochondrial GTPase that catalyzes the GTP-dependent ribosomal translocation step during translation elongation. During this step, the ribosome changes from the pre-translocational (PRE) to the post-translocational (POST) state as the newly formed A-site-bound peptidyl-tRNA and P-site-bound deacylated tRNA move to the P and E sites, respectively. Catalyzes the coordinated movement of the two tRNA molecules, the mRNA and conformational changes in the ribosome. Essential during development as it acts as a retrograde signal from mitochondria to the nucleus to slow down cell proliferation if mitochondrial energy output is low. In Drosophila ananassae (Fruit fly), this protein is Elongation factor G, mitochondrial (ico).